A 416-amino-acid chain; its full sequence is Enterobactin exporter EntS (416 aa).

Over 1–21 (MNKQSWLLNLSLLKTHPAFRA) the chain is Cytoplasmic. The helical transmembrane segment at 22-42 (VFLARFISIVSLGLLGVAVPV) threads the bilayer. Residues 43–55 (QIQMMTHSTWQVG) lie on the Periplasmic side of the membrane. The helical transmembrane segment at 56 to 76 (LSVTLTGGAMFVGLMVGGVLA) threads the bilayer. Over 77–83 (DRYERKK) the chain is Cytoplasmic. A helical transmembrane segment spans residues 84-104 (VILLARGTCGIGFIGLCLNAL). Over 105 to 109 (LPEPS) the chain is Periplasmic. The chain crosses the membrane as a helical span at residues 110 to 130 (LLAIYLLGLWDGFFASLGVTA). The Cytoplasmic portion of the chain corresponds to 131-156 (LLAATPALVGRENLMQAGAITMLTVR). A helical membrane pass occupies residues 157–177 (LGSVISPMIGGLLLATGGVAW). Asparagine 178 is a topological domain (periplasmic). A helical transmembrane segment spans residues 179–199 (YGLAAAGTFITLLPLLSLPAL). Over 200 to 218 (PPPPQPREHPLKSLLAGFR) the chain is Cytoplasmic. A helical membrane pass occupies residues 219 to 239 (FLLASPLVGGIALLGGLLTMA). At 240-256 (SAVRVLYPALADNWQMS) the chain is on the periplasmic side. Residues 257–277 (AAQIGFLYAAIPLGAAIGALT) form a helical membrane-spanning segment. Over 278–287 (SGKLAHSVRP) the chain is Cytoplasmic. Residues 288–307 (GLLMLLSTLGAFLAIGLFGL) form a helical membrane-spanning segment. The Periplasmic portion of the chain corresponds to 308-313 (MPMWIL). The chain crosses the membrane as a helical span at residues 314–336 (GVVCLALFGWLSAVSSLLQYTML). Residues 337-356 (QTQTPEAMLGRINGLWTAQN) are Cytoplasmic-facing. A helical transmembrane segment spans residues 357-377 (VTGDAIGAALLGGLGAMMTPV). Residue alanine 378 is a topological domain, periplasmic. The chain crosses the membrane as a helical span at residues 379-399 (SASASGFGLLIIGVLLLLVLV). Residues 400–416 (ELRRFRQTPPQVTASDS) lie on the Cytoplasmic side of the membrane.

It belongs to the major facilitator superfamily. EntS (TC 2.A.1.38) family.

The protein resides in the cell inner membrane. In terms of biological role, component of an export pathway for enterobactin. In Escherichia coli O6:H1 (strain CFT073 / ATCC 700928 / UPEC), this protein is Enterobactin exporter EntS.